Reading from the N-terminus, the 202-residue chain is Regulator of G-protein signaling 16 (202 aa).

Residues cysteine 2 and cysteine 12 are each lipidated (S-palmitoyl cysteine). In terms of domain architecture, RGS spans 65–181 (SFDLLLSSKN…LKSPAYRDLA (117 aa)). Tyrosine 168 carries the post-translational modification Phosphotyrosine; by EGFR. Tyrosine 177 carries the post-translational modification Phosphotyrosine. The disordered stretch occupies residues 183 to 202 (QATAASASPSSSSPAEPLHT).

As to quaternary structure, interacts with GNAI1 and GNAQ. Interacts with GNAI3, GNAI3 and GNAO1. In terms of processing, palmitoylated on Cys-2 and/or Cys-12. Phosphorylated. Phosphorylation at Tyr-168 by EGFR enhances GTPase accelerating (GAP) activity toward GNAI1.

It localises to the membrane. In terms of biological role, regulates G protein-coupled receptor signaling cascades. Inhibits signal transduction by increasing the GTPase activity of G protein alpha subunits, thereby driving them into their inactive GDP-bound form. Plays an important role in the phototransduction cascade by regulating the lifetime and effective concentration of activated transducin alpha. May regulate extra and intracellular mitogenic signals. The protein is Regulator of G-protein signaling 16 (RGS16) of Bos taurus (Bovine).